A 609-amino-acid chain; its full sequence is MSMLRIWSCIVHFFSVQALDSRIKPDIEFKRRQRIFINSSKEENGSSSSAVTVTRNPVLSSNSPSPPLWNTWEFRLYYLAFTVVVPFMIKAALATSSESNPNYYKFSGLLAHGWILGRKVDNSDPQYRFFRSNFFLLAILILLQIILKKVFVKFSKIPKTKFDFACGLVFVCFMYGINSVKLFTHAFIFFTLAHSLKRKRLIAAFAIWSYGIFTLFINQKMKNLPFNNIAIILSPMDQWYKGIVPRWDFFFNFTLLRLLSYSMDFLERWHEQLSRQPSIDYDDRRPEFRKSLSGSTLQTIYESGKNVLEEKERLVAEHHIQDYNFINFIAYITYAPLFLVGPIITFNDYLYQSENKLPSLTKKNIGFYALKVFSSLLLMEIILHYIYVGAIARTKAWNNDTPLQQAMIALFNLNIMYLKLLIPWRLFRLWAMVDGIDAPENMLRCVDNNYSTVGFWRAWHTSFNKWVIRYIYVPFGGSNNKILTSFAVFSFVAIWHDIQLRVLFWGWLTVLLLLGETYITNCFSRYRFRSWYRFVCGIGAAINICMMMIINVYGFCLGAEGTKLLLKGIFNNSHSPEFLTAVMVSLFIAVQVMFEIREEEKRHGINLKC.

Positions 1–18 (MSMLRIWSCIVHFFSVQA) are cleaved as a signal peptide. Topologically, residues 19-75 (LDSRIKPDIEFKRRQRIFINSSKEENGSSSSAVTVTRNPVLSSNSPSPPLWNTWEFR) are lumenal. Residues 76–96 (LYYLAFTVVVPFMIKAALATS) traverse the membrane as a helical segment. At 97-133 (SESNPNYYKFSGLLAHGWILGRKVDNSDPQYRFFRSN) the chain is on the cytoplasmic side. A helical transmembrane segment spans residues 134 to 154 (FFLLAILILLQIILKKVFVKF). Residues 155–169 (SKIPKTKFDFACGLV) lie on the Lumenal side of the membrane. A helical transmembrane segment spans residues 170–190 (FVCFMYGINSVKLFTHAFIFF). Topologically, residues 191–200 (TLAHSLKRKR) are cytoplasmic. Residues 201–221 (LIAAFAIWSYGIFTLFINQKM) traverse the membrane as a helical segment. The Lumenal segment spans residues 222-324 (KNLPFNNIAI…VAEHHIQDYN (103 aa)). Residues 325–345 (FINFIAYITYAPLFLVGPIIT) traverse the membrane as a helical segment. Residues 346-371 (FNDYLYQSENKLPSLTKKNIGFYALK) are Cytoplasmic-facing. A helical transmembrane segment spans residues 372–392 (VFSSLLLMEIILHYIYVGAIA). The Lumenal portion of the chain corresponds to 393-406 (RTKAWNNDTPLQQA). A helical membrane pass occupies residues 407–427 (MIALFNLNIMYLKLLIPWRLF). The Cytoplasmic portion of the chain corresponds to 428 to 474 (RLWAMVDGIDAPENMLRCVDNNYSTVGFWRAWHTSFNKWVIRYIYVP). A helical membrane pass occupies residues 475–495 (FGGSNNKILTSFAVFSFVAIW). Residue His496 is part of the active site. Residues 496–502 (HDIQLRV) are Lumenal-facing. A helical transmembrane segment spans residues 503–523 (LFWGWLTVLLLLGETYITNCF). At 524 to 533 (SRYRFRSWYR) the chain is on the cytoplasmic side. Residues 534–554 (FVCGIGAAINICMMMIINVYG) traverse the membrane as a helical segment. Over 555 to 575 (FCLGAEGTKLLLKGIFNNSHS) the chain is Lumenal. A helical membrane pass occupies residues 576–596 (PEFLTAVMVSLFIAVQVMFEI). Over 597–609 (REEEKRHGINLKC) the chain is Cytoplasmic.

This sequence belongs to the membrane-bound acyltransferase family.

The protein localises to the endoplasmic reticulum membrane. Functionally, probable membrane-bound O-acyltransferase. Together with GUP1, has an influence on the chemical composition of the yeast extracellular matrix (yECM) in yeast multicellular aggregates, such as biofilms and colonies. This Saccharomyces cerevisiae (strain ATCC 204508 / S288c) (Baker's yeast) protein is Membrane-bound O-acyltransferase GUP2 (GUP2).